The chain runs to 425 residues: Ribulose bisphosphate carboxylase/oxygenase activase B, chloroplastic (425 aa).

Residues 1 to 43 (MASAFSSTVGAPASTPTIFLGKKVKNYYHGGNKMKSRVVRVMA) constitute a chloroplast transit peptide. Position 153–160 (153–160 (GGKGQGKS)) interacts with ATP.

It belongs to the RuBisCO activase family.

The protein resides in the plastid. Its subcellular location is the chloroplast stroma. In terms of biological role, activation of RuBisCO (ribulose-1,5-bisphosphate carboxylase/oxygenase; EC 4.1.1.39) involves the ATP-dependent carboxylation of the epsilon-amino group of lysine leading to a carbamate structure. This Hordeum vulgare (Barley) protein is Ribulose bisphosphate carboxylase/oxygenase activase B, chloroplastic (RCAB).